A 948-amino-acid chain; its full sequence is Hexagonally packed intermediate-layer surface protein (948 aa).

The N-terminal stretch at 1–17 is a signal peptide; it reads MKKNIALMALTGILTLA. Intrachain disulfides connect C168-C187 and C554-C666.

In terms of processing, glycosylated. Contains tightly bound reducing sugars (six per polypeptide chain) and fatty acids (covalently bound and located in the N-terminal region).

Its subcellular location is the secreted. It is found in the cell wall. The protein localises to the S-layer. Its function is as follows. Shape maintenance, possible protection from noxious enzymes or exogenous and unsettling DNA, and may mediate homotypic cell-cell contacts. The sequence is that of Hexagonally packed intermediate-layer surface protein (hpi) from Deinococcus radiodurans (strain ATCC 13939 / DSM 20539 / JCM 16871 / CCUG 27074 / LMG 4051 / NBRC 15346 / NCIMB 9279 / VKM B-1422 / R1).